The chain runs to 91 residues: Putative septation protein SpoVG (91 aa).

The protein belongs to the SpoVG family.

Its function is as follows. Could be involved in septation. The sequence is that of Putative septation protein SpoVG from Clostridium botulinum (strain Alaska E43 / Type E3).